The following is a 342-amino-acid chain: Antihemorrhagic factor cHLP-B (342 aa).

The first 19 residues, 1–19, serve as a signal peptide directing secretion; it reads MNSLVALVLLGQMIGSTLS. Cystatin fetuin-A-type domains lie at 20–129 and 140–253; these read HHLQ…AKCH and RNCP…SDCV. Disulfide bonds link Cys28–Cys333, Cys85–Cys96, Cys110–Cys128, Cys142–Cys145, Cys204–Cys216, and Cys229–Cys252. Asn95 carries an N-linked (GlcNAc...) asparagine glycan. Residue Asn203 is glycosylated (N-linked (GlcNAc...) asparagine). Residues Asn281 and Asn292 are each glycosylated (N-linked (GlcNAc...) asparagine).

It belongs to the fetuin family. Homodimer. In terms of tissue distribution, expressed by the liver.

It is found in the secreted. Potent inhibitor of hemorrhagic activity but also proteolytic activities. Inhibition occurs by formation of a non-covalent complex between this protein and the proteinases at their metalloproteinase domains. The protein is Antihemorrhagic factor cHLP-B of Gloydius brevicauda (Korean slamosa snake).